A 194-amino-acid chain; its full sequence is 13S globulin basic chain (194 aa).

A Cupin type-1 domain is found at 13–162 (ENIKSPQEAD…SFQISSEEAE (150 aa)).

The protein belongs to the 11S seed storage protein (globulins) family. As to quaternary structure, hexamer; each subunit is composed of an acidic and a basic chain derived from a single precursor and linked by a disulfide bond. As to expression, cotyledons and endosperm protein bodies.

Seed storage protein with a relatively high level of Lys and Met. The polypeptide is 13S globulin basic chain (Fagopyrum esculentum (Common buckwheat)).